The sequence spans 466 residues: Fumarate hydratase class II (466 aa).

Residues 99 to 101 (SGT), 129 to 132 (HPND), 139 to 141 (SSN), and threonine 187 each bind substrate. Histidine 188 serves as the catalytic Proton donor/acceptor. The active site involves serine 318. Substrate-binding positions include serine 319 and 324–326 (KVN).

The protein belongs to the class-II fumarase/aspartase family. Fumarase subfamily. In terms of assembly, homotetramer.

It localises to the cytoplasm. The catalysed reaction is (S)-malate = fumarate + H2O. Its pathway is carbohydrate metabolism; tricarboxylic acid cycle; (S)-malate from fumarate: step 1/1. Functionally, involved in the TCA cycle. Catalyzes the stereospecific interconversion of fumarate to L-malate. This is Fumarate hydratase class II from Thermus aquaticus.